Reading from the N-terminus, the 191-residue chain is Prostaglandin-H2 D-isomerase (191 aa).

Positions 1–24 are cleaved as a signal peptide; sequence MGALCTLWLGLVLLGVLGALQTSA. A Pyrrolidone carboxylic acid modification is found at glutamine 25. A glycan (N-linked (GlcNAc...) asparagine) is linked at asparagine 51. The active-site Nucleophile is the cysteine 65. Asparagine 78 carries an N-linked (GlcNAc...) asparagine glycan. Cysteine 89 and cysteine 186 form a disulfide bridge.

Belongs to the calycin superfamily. Lipocalin family. Monomer. In terms of processing, N- and O-glycosylated. Both N-glycosylation recognition sites are almost quantitatively occupied by N-glycans of the biantennary complex type, with a considerable proportion of structures bearing a bisecting GlcNAc. N-glycan at Asn-78: dHex1Hex5HexNAc4. Agalacto structure as well as sialylated and nonsialylated oligosaccharides bearing alpha2-3- and/or alpha2-6-linked NeuNAc are present.

It is found in the rough endoplasmic reticulum. The protein localises to the nucleus membrane. Its subcellular location is the golgi apparatus. It localises to the cytoplasm. The protein resides in the perinuclear region. It is found in the secreted. It carries out the reaction prostaglandin H2 = prostaglandin D2. Its function is as follows. Catalyzes the conversion of PGH2 to PGD2, a prostaglandin involved in smooth muscle contraction/relaxation and a potent inhibitor of platelet aggregation. Involved in a variety of CNS functions, such as sedation, NREM sleep and PGE2-induced allodynia, and may have an anti-apoptotic role in oligodendrocytes. Binds small non-substrate lipophilic molecules, including biliverdin, bilirubin, retinal, retinoic acid and thyroid hormone, and may act as a scavenger for harmful hydrophobic molecules and as a secretory retinoid and thyroid hormone transporter. Possibly involved in development and maintenance of the blood-brain, blood-retina, blood-aqueous humor and blood-testis barrier. It is likely to play important roles in both maturation and maintenance of the central nervous system and male reproductive system. Involved in PLA2G3-dependent maturation of mast cells. PLA2G3 is secreted by immature mast cells and acts on nearby fibroblasts upstream to PTDGS to synthesize PGD2, which in turn promotes mast cell maturation and degranulation via PTGDR. The polypeptide is Prostaglandin-H2 D-isomerase (PTGDS) (Canis lupus familiaris (Dog)).